The chain runs to 577 residues: Protein downstream neighbor of son homolog (577 aa).

2 disordered regions span residues 1-67 (MAEL…KRRN) and 328-382 (FTQP…LEEM). A compositionally biased stretch (acidic residues) spans 362-375 (ETDEVSDESDEDES).

The protein belongs to the DONSON family. In terms of assembly, component of the replisome complex.

The protein localises to the nucleus. Its function is as follows. Replisome component that maintains genome stability by protecting stalled or damaged replication forks. After the induction of replication stress, required for the stabilization of stalled replication forks, the efficient activation of the intra-S-phase and G/2M cell-cycle checkpoints and the maintenance of genome stability. This chain is Protein downstream neighbor of son homolog, found in Xenopus tropicalis (Western clawed frog).